The chain runs to 349 residues: Bifunctional protein FolKE (349 aa).

The tract at residues 1-226 is 2-amino-4-hydroxy-6-hydroxymethyldihydropteridine pyrophosphokinase; that stretch reads MQTTYLSMGS…LFEIDSSKTD (226 aa). The GTP cyclohydrolase 1 stretch occupies residues 226–349; it reads DSIVLIKDIP…KRMEFLESLL (124 aa).

In the N-terminal section; belongs to the HPPK family. This sequence in the C-terminal section; belongs to the GTP cyclohydrolase I family. As to quaternary structure, homomer.

It carries out the reaction 6-hydroxymethyl-7,8-dihydropterin + ATP = (7,8-dihydropterin-6-yl)methyl diphosphate + AMP + H(+). It catalyses the reaction GTP + H2O = 7,8-dihydroneopterin 3'-triphosphate + formate + H(+). It participates in cofactor biosynthesis; 7,8-dihydroneopterin triphosphate biosynthesis; 7,8-dihydroneopterin triphosphate from GTP: step 1/1. Its pathway is cofactor biosynthesis; tetrahydrofolate biosynthesis; 2-amino-4-hydroxy-6-hydroxymethyl-7,8-dihydropteridine diphosphate from 7,8-dihydroneopterin triphosphate: step 4/4. In Lactococcus lactis subsp. lactis (strain IL1403) (Streptococcus lactis), this protein is Bifunctional protein FolKE (folKE).